The primary structure comprises 230 residues: 7-cyano-7-deazaguanine synthase (230 aa).

9 to 19 (LSGGLDSATTA) is a binding site for ATP. The Zn(2+) site is built by Cys190, Cys198, Cys201, and Cys204.

The protein belongs to the QueC family. Requires Zn(2+) as cofactor.

It carries out the reaction 7-carboxy-7-deazaguanine + NH4(+) + ATP = 7-cyano-7-deazaguanine + ADP + phosphate + H2O + H(+). It participates in purine metabolism; 7-cyano-7-deazaguanine biosynthesis. Catalyzes the ATP-dependent conversion of 7-carboxy-7-deazaguanine (CDG) to 7-cyano-7-deazaguanine (preQ(0)). The polypeptide is 7-cyano-7-deazaguanine synthase (Microcystis aeruginosa (strain NIES-843 / IAM M-2473)).